The sequence spans 109 residues: uncharacterized protein (109 aa).

Its subcellular location is the mitochondrion. This is an uncharacterized protein from Arabidopsis thaliana (Mouse-ear cress).